Here is a 396-residue protein sequence, read N- to C-terminus: MNLFPETVATDDKVSQLFKTSNALDKKATPLIKVQKIEVIKKTDKDADGDEKMEDAASDDAKVKKPSKKKLAKKNKETKTPEQVPEEPEKLVEEGKESKKSTKEDEIEKASRTIFVGNLSNEVIISKSTYKLFQKLFNNIDDDDENKKLPIQSIRFRSVSFEDALPRKVAFVQQKLHKSRASVNAYIVYKEQSPLLNKLIKRLNGQVFSNRHLRVDSITHPAPHDKQRSVFVGNLDFEEDEESLWKHFGACGSIEYVRIVRDPKTNMGKGFAYVQFNELQSVSKALLLNEKPMISQNEHLKKRKLRVTRCKNIRKVEPTLKSGKYMTDGQKTKLGRAKKILNKAERSKLLKELTVEGIRATKDDSKPVLKKGKKERSKTGRVTKRSQAFKKSQQKK.

Positions 43-104 (TDKDADGDEK…GKESKKSTKE (62 aa)) are disordered. Residues 47 to 58 (ADGDEKMEDAAS) show a composition bias toward acidic residues. Residues 64–73 (KKPSKKKLAK) show a composition bias toward basic residues. Basic and acidic residues predominate over residues 87-104 (EPEKLVEEGKESKKSTKE). RRM domains lie at 112–220 (RTIF…SITH) and 228–312 (RSVF…RCKN). The tract at residues 361-396 (TKDDSKPVLKKGKKERSKTGRVTKRSQAFKKSQQKK) is disordered. A compositionally biased stretch (basic residues) spans 368 to 396 (VLKKGKKERSKTGRVTKRSQAFKKSQQKK).

Belongs to the RRM RBM34 family.

Its subcellular location is the nucleus. It is found in the nucleolus. Functionally, involved in pre-25S rRNA processing. In Candida glabrata (strain ATCC 2001 / BCRC 20586 / JCM 3761 / NBRC 0622 / NRRL Y-65 / CBS 138) (Yeast), this protein is Nucleolar protein 12 (NOP12).